The sequence spans 242 residues: Probable derlin-1 homolog (242 aa).

Over 1–18 (MDGVKEWFNSIPPVSRYM) the chain is Cytoplasmic. Residues 19–39 (FAIFLGIPVLAAMHLISFNYL) traverse the membrane as a helical segment. At 40–98 (YLDFTFTFKHFHLWRLITAPCIISSLGPMFLFNLIFFYQYTTRLESLNYAGKSDDYLFC) the chain is on the lumenal side. Residues 99–119 (IIFISICNIIFGLIFEYYFLG) form a helical membrane-spanning segment. At 120–140 (TMTIMSLIYIYSRMNPTGTSN) the chain is on the cytoplasmic side. The chain crosses the membrane as a helical span at residues 141–161 (FYGFFSFKTIYLPWVFLVAHF). The Lumenal segment spans residues 162 to 167 (LQTGHP). The chain crosses the membrane as a helical span at residues 168–188 (PYSDFLAIVSGHIFFYLTDIY). Over 189-242 (PRANGVPALIKTPKFITNIFNKGDRNPNNVRRDPRTGRPIQEGGYNWGQGHALG) the chain is Cytoplasmic. Residues 214-224 (NPNNVRRDPRT) are compositionally biased toward basic and acidic residues. The segment at 214–242 (NPNNVRRDPRTGRPIQEGGYNWGQGHALG) is disordered. Over residues 233-242 (YNWGQGHALG) the composition is skewed to gly residues.

Belongs to the derlin family.

The protein resides in the endoplasmic reticulum membrane. In terms of biological role, may be involved in the degradation process of specific misfolded endoplasmic reticulum (ER) luminal proteins. May also involved in endoplasmic reticulum stress-induced pre-emptive quality control, a mechanism that selectively attenuates the translocation of newly synthesized proteins into the endoplasmic reticulum and reroutes them to the cytosol for proteasomal degradation. In Dictyostelium discoideum (Social amoeba), this protein is Probable derlin-1 homolog.